Consider the following 444-residue polypeptide: Tubulin beta-8 chain (444 aa).

An MREI motif motif is present at residues 1 to 4 (MREI). Q11, E69, S138, G142, T143, and G144 together coordinate GTP. E69 contacts Mg(2+). S172 is subject to Phosphoserine; by CDK1. N204 and N226 together coordinate GTP. A disordered region spans residues 423–444 (QQYQDATAEEEEDEEYAEEEVA). Positions 429-444 (TAEEEEDEEYAEEEVA) are enriched in acidic residues. A 5-glutamyl polyglutamate modification is found at E436.

The protein belongs to the tubulin family. As to quaternary structure, dimer of alpha and beta chains. A typical microtubule is a hollow water-filled tube with an outer diameter of 25 nm and an inner diameter of 15 nM. Alpha-beta heterodimers associate head-to-tail to form protofilaments running lengthwise along the microtubule wall with the beta-tubulin subunit facing the microtubule plus end conferring a structural polarity. Microtubules usually have 13 protofilaments but different protofilament numbers can be found in some organisms and specialized cells. Mg(2+) serves as cofactor. Some glutamate residues at the C-terminus are polyglutamylated, resulting in polyglutamate chains on the gamma-carboxyl group. Polyglutamylation plays a key role in microtubule severing by spastin (SPAST). SPAST preferentially recognizes and acts on microtubules decorated with short polyglutamate tails: severing activity by SPAST increases as the number of glutamates per tubulin rises from one to eight, but decreases beyond this glutamylation threshold. Glutamylation is also involved in cilia motility. Post-translationally, some glutamate residues at the C-terminus are monoglycylated but not polyglycylated due to the absence of functional TTLL10 in human. Monoglycylation is mainly limited to tubulin incorporated into cilia and flagella axonemes, which is required for their stability and maintenance. Flagella glycylation controls sperm motility. Both polyglutamylation and monoglycylation can coexist on the same protein on adjacent residues, and lowering glycylation levels increases polyglutamylation, and reciprocally. In terms of processing, phosphorylated on Ser-172 by CDK1 during the cell cycle, from metaphase to telophase, but not in interphase. This phosphorylation inhibits tubulin incorporation into microtubules. Expressed at a high level in oocytes, at different stages of development.

The protein resides in the cytoplasm. It localises to the cytoskeleton. Its subcellular location is the spindle. Tubulin is the major constituent of microtubules, a cylinder consisting of laterally associated linear protofilaments composed of alpha- and beta-tubulin heterodimers. Microtubules grow by the addition of GTP-tubulin dimers to the microtubule end, where a stabilizing cap forms. Below the cap, tubulin dimers are in GDP-bound state, owing to GTPase activity of alpha-tubulin. TUBB8 has a key role in meiotic spindle assembly and oocyte maturation. This chain is Tubulin beta-8 chain, found in Homo sapiens (Human).